The following is a 123-amino-acid chain: Large ribosomal subunit protein uL14 (123 aa).

The protein belongs to the universal ribosomal protein uL14 family. In terms of assembly, part of the 50S ribosomal subunit. Forms a cluster with proteins L3 and L19. In the 70S ribosome, L14 and L19 interact and together make contacts with the 16S rRNA in bridges B5 and B8.

In terms of biological role, binds to 23S rRNA. Forms part of two intersubunit bridges in the 70S ribosome. The protein is Large ribosomal subunit protein uL14 of Escherichia coli O6:K15:H31 (strain 536 / UPEC).